The sequence spans 1912 residues: Protein javelin (1912 aa).

Disordered regions lie at residues 1-32 (MGNGYFRTSQTSSSSRQREKRGKDSYSYQHNY), 89-145 (GTGL…VGGA), 298-377 (RSRH…HRLS), 460-515 (QSRR…SLSE), 545-586 (TTRT…TLRQ), 764-920 (SYNQ…EAPV), 965-1010 (IQEN…GKPL), 1257-1297 (GINS…GGAA), 1486-1507 (EQQENGEHLEEEDDEQDDQYED), and 1881-1912 (YDPSKEPPPQVEEGTDKIPTDAELYDSLDDKM). Composition is skewed to basic residues over residues 97 to 133 (QQLHHHHSNQVNQHHHQQQQSHHHLQHANLHSHHPHA) and 299 to 313 (SRHKFQFKQFKKKPP). Over residues 339-354 (ADDTQSQRSNSATCDS) the composition is skewed to polar residues. Residues 355–374 (HQQQQQQQHQPQQQHQQQQH) show a composition bias toward low complexity. Residues 489-498 (EHSQSSVFPE) show a composition bias toward polar residues. The span at 499 to 512 (TTTSNSDDQTDSPS) shows a compositional bias: low complexity. Positions 553-566 (SEEGEEEQTGEEVV) are enriched in acidic residues. The span at 568–586 (SLTTPTEPQTSDSESTLRQ) shows a compositional bias: polar residues. 2 stretches are compositionally biased toward basic and acidic residues: residues 772-792 (QRKEAKKEQQVTRAETYDSIR) and 802-869 (RQRE…RKEE). Over residues 890-904 (SQQEDTVADVEEEDN) the composition is skewed to acidic residues. Over residues 965–979 (IQENKETSQRIEPKP) the composition is skewed to basic and acidic residues. The segment covering 981 to 990 (PKTNSNSSST) has biased composition (low complexity). Composition is skewed to acidic residues over residues 1494 to 1507 (LEEEDDEQDDQYED) and 1903 to 1912 (ELYDSLDDKM).

Its subcellular location is the cytoplasm. It is found in the cytoskeleton. Its function is as follows. Important for normal assembly of actin bundles during bristle formation. This chain is Protein javelin, found in Drosophila melanogaster (Fruit fly).